Here is a 205-residue protein sequence, read N- to C-terminus: High frequency lysogenization protein HflD homolog (205 aa).

This sequence belongs to the HflD family.

It localises to the cytoplasm. The protein localises to the cell inner membrane. The sequence is that of High frequency lysogenization protein HflD homolog from Shewanella sp. (strain MR-7).